The following is a 430-amino-acid chain: Adenylosuccinate synthetase (430 aa).

Residues 12 to 18 (GDEGKGK) and 40 to 42 (GHT) each bind GTP. Aspartate 13 functions as the Proton acceptor in the catalytic mechanism. Mg(2+) is bound by residues aspartate 13 and glycine 40. IMP-binding positions include 13-16 (DEGK), 38-41 (NAGH), threonine 128, arginine 142, glutamine 223, threonine 238, and arginine 302. The active-site Proton donor is histidine 41. Substrate is bound at residue 298-304 (TTTGRPR). GTP is bound by residues arginine 304, 330-332 (SID), and 412-414 (SVG).

The protein belongs to the adenylosuccinate synthetase family. As to quaternary structure, homodimer. Mg(2+) serves as cofactor.

It localises to the cytoplasm. The enzyme catalyses IMP + L-aspartate + GTP = N(6)-(1,2-dicarboxyethyl)-AMP + GDP + phosphate + 2 H(+). The protein operates within purine metabolism; AMP biosynthesis via de novo pathway; AMP from IMP: step 1/2. Its function is as follows. Plays an important role in the de novo pathway of purine nucleotide biosynthesis. Catalyzes the first committed step in the biosynthesis of AMP from IMP. This is Adenylosuccinate synthetase from Streptococcus pyogenes serotype M4 (strain MGAS10750).